The primary structure comprises 772 residues: 1,4-alpha-glucan branching enzyme GlgB (772 aa).

Asp431 serves as the catalytic Nucleophile. Glu484 (proton donor) is an active-site residue.

Belongs to the glycosyl hydrolase 13 family. GlgB subfamily. In terms of assembly, monomer.

The enzyme catalyses Transfers a segment of a (1-&gt;4)-alpha-D-glucan chain to a primary hydroxy group in a similar glucan chain.. Its pathway is glycan biosynthesis; glycogen biosynthesis. Catalyzes the formation of the alpha-1,6-glucosidic linkages in glycogen by scission of a 1,4-alpha-linked oligosaccharide from growing alpha-1,4-glucan chains and the subsequent attachment of the oligosaccharide to the alpha-1,6 position. This chain is 1,4-alpha-glucan branching enzyme GlgB, found in Synechococcus sp. (strain RCC307).